Consider the following 241-residue polypeptide: Probable transcriptional regulatory protein AZOSEA20720 (241 aa).

Residues 1–21 (MAGHSKWANIQHRKGRQDAKR) form a disordered region.

Belongs to the TACO1 family.

It localises to the cytoplasm. This Aromatoleum aromaticum (strain DSM 19018 / LMG 30748 / EbN1) (Azoarcus sp. (strain EbN1)) protein is Probable transcriptional regulatory protein AZOSEA20720.